The chain runs to 378 residues: Transmembrane protein adipocyte-associated 1 homolog (378 aa).

Residues asparagine 16, asparagine 25, and asparagine 36 are each glycosylated (N-linked (GlcNAc...) asparagine). The next 7 membrane-spanning stretches (helical) occupy residues 61-81 (VMLL…LPSA), 88-108 (TSSP…AVGI), 136-156 (FFLL…GHLE), 164-184 (VLAI…TLEI), 205-225 (HFWL…VILP), 247-267 (ILAL…ADII), and 278-298 (FLYF…GFFG). The interval 316-335 (DSDVHLPHTSSSGLGRKDLD) is disordered.

Belongs to the UPF0359 family.

Its subcellular location is the membrane. In Danio rerio (Zebrafish), this protein is Transmembrane protein adipocyte-associated 1 homolog (tpra1).